The primary structure comprises 209 residues: 3-demethoxyubiquinol 3-hydroxylase (209 aa).

Residues Glu-58, Glu-88, His-91, Glu-140, Glu-172, and His-175 each coordinate Fe cation.

This sequence belongs to the COQ7 family. Fe cation is required as a cofactor.

Its subcellular location is the cell membrane. The enzyme catalyses a 5-methoxy-2-methyl-3-(all-trans-polyprenyl)benzene-1,4-diol + AH2 + O2 = a 3-demethylubiquinol + A + H2O. It participates in cofactor biosynthesis; ubiquinone biosynthesis. Functionally, catalyzes the hydroxylation of 2-nonaprenyl-3-methyl-6-methoxy-1,4-benzoquinol during ubiquinone biosynthesis. This chain is 3-demethoxyubiquinol 3-hydroxylase, found in Polaromonas naphthalenivorans (strain CJ2).